A 292-amino-acid polypeptide reads, in one-letter code: Acetyl-coenzyme A carboxylase carboxyl transferase subunit beta (292 aa).

The CoA carboxyltransferase N-terminal domain maps to 29-292 (LWSKCPECGQ…HGCLQGSAAV (264 aa)). The Zn(2+) site is built by Cys-33, Cys-36, Cys-52, and Cys-55. Residues 33–55 (CPECGQVVYRKDLLANASVCSNC) form a C4-type zinc finger.

The protein belongs to the AccD/PCCB family. Acetyl-CoA carboxylase is a heterohexamer composed of biotin carboxyl carrier protein (AccB), biotin carboxylase (AccC) and two subunits each of ACCase subunit alpha (AccA) and ACCase subunit beta (AccD). Zn(2+) is required as a cofactor.

It localises to the cytoplasm. The catalysed reaction is N(6)-carboxybiotinyl-L-lysyl-[protein] + acetyl-CoA = N(6)-biotinyl-L-lysyl-[protein] + malonyl-CoA. The protein operates within lipid metabolism; malonyl-CoA biosynthesis; malonyl-CoA from acetyl-CoA: step 1/1. Its function is as follows. Component of the acetyl coenzyme A carboxylase (ACC) complex. Biotin carboxylase (BC) catalyzes the carboxylation of biotin on its carrier protein (BCCP) and then the CO(2) group is transferred by the transcarboxylase to acetyl-CoA to form malonyl-CoA. The protein is Acetyl-coenzyme A carboxylase carboxyl transferase subunit beta of Synechococcus sp. (strain WH7803).